Consider the following 728-residue polypeptide: Catalase-peroxidase (728 aa).

Residues 1 to 19 (MSTEAKCPVTGGATRSSSA) form the signal peptide. Positions 1 to 20 (MSTEAKCPVTGGATRSSSAG) are disordered. A cross-link (tryptophyl-tyrosyl-methioninium (Trp-Tyr) (with M-245)) is located at residues 96-219 (WHAAGTYRIG…LAAVQMGLIY (124 aa)). The Proton acceptor role is filled by H97. Positions 219–245 (YVNPEGPNGKPDPVAAARDIRETFARM) form a cross-link, tryptophyl-tyrosyl-methioninium (Tyr-Met) (with W-96). H260 is a heme b binding site.

Belongs to the peroxidase family. Peroxidase/catalase subfamily. In terms of assembly, homodimer or homotetramer. Heme b serves as cofactor. Formation of the three residue Trp-Tyr-Met cross-link is important for the catalase, but not the peroxidase activity of the enzyme.

It carries out the reaction H2O2 + AH2 = A + 2 H2O. The enzyme catalyses 2 H2O2 = O2 + 2 H2O. Functionally, bifunctional enzyme with both catalase and broad-spectrum peroxidase activity. This chain is Catalase-peroxidase, found in Acidiphilium cryptum (strain JF-5).